We begin with the raw amino-acid sequence, 1871 residues long: Protein RRP5 homolog (1871 aa).

Positions 1–62 (MANLEESFPR…KTKKLKIEKR (62 aa)) are disordered. Position 2 is an N-acetylalanine (alanine 2). Serine 7 is modified (phosphoserine). Positions 43–59 (KRKKSQKGPAKTKKLKI) are enriched in basic residues. 4 S1 motif domains span residues 83-171 (GMRI…LSLN), 187-258 (GMLL…LSVG), 281-346 (GLVV…LSLR), and 365-436 (GAVL…LSLR). Position 438 is a phosphoserine (serine 438). 4 consecutive S1 motif domains span residues 453–522 (GAVV…MTLK), 542–611 (GLQT…LSFK), 636–707 (GQLV…LCRK), and 729–798 (GMLL…LSLR). Residues 998–1018 (AAKRTMRPTQKDSETVDEDEE) form a disordered region. Lysine 1030 is covalently cross-linked (Glycyl lysine isopeptide (Lys-Gly) (interchain with G-Cter in SUMO1)). S1 motif domains follow at residues 1036-1109 (GDMV…ISHP), 1149-1222 (GQTV…LSLT), 1230-1298 (GEVA…LSLR), and 1324-1396 (GQLL…LSFL). Phosphoserine occurs at positions 1360 and 1362. Disordered stretches follow at residues 1395–1531 (FLPG…APRL) and 1549–1586 (ALPPLAESSDSEEDEKPHQATIKKSKKERELEKQKAEK). Lysine 1416 is covalently cross-linked (Glycyl lysine isopeptide (Lys-Gly) (interchain with G-Cter in SUMO2)). 2 stretches are compositionally biased toward basic and acidic residues: residues 1416–1459 (KQEE…EKQQ) and 1469–1484 (GGRECRESGSEQERVS). Phosphoserine is present on residues serine 1476, serine 1493, and serine 1498. The segment covering 1575 to 1586 (KERELEKQKAEK) has biased composition (basic and acidic residues). 4 HAT repeats span residues 1599-1631 (GRQPESADDFDRLVLSSPNSSILWLQYMAFHLQ), 1705-1737 (EKFQEAGELYNRMLKRFRQEKAVWIKYGAFLLR), 1775-1807 (GDAERAKAIFENTLSTYPKRTDVWSVYIDMTIK), and 1809-1844 (GSQKDVRDIFERVIHLSLAPKRMKFFFKRYLDYEKQ).

Interacts with NF-kappa-B p50/NFKB1 and NF-kappa-B p65/RELA.

The protein localises to the nucleus. It localises to the nucleolus. In terms of biological role, essential for the generation of mature 18S rRNA, specifically necessary for cleavages at sites A0, 1 and 2 of the 47S precursor. Directly interacts with U3 snoRNA. Involved in the biogenesis of rRNA. This is Protein RRP5 homolog (PDCD11) from Homo sapiens (Human).